Consider the following 373-residue polypeptide: Diels-Alderase (373 aa).

It belongs to the Diels-Alderase family.

The enzyme catalyses (5S)-3-[(2E,6R,8E,10E,12E)-2,6-dimethyltetradeca-2,8,10,12-tetraenoyl]-5-(hydroxymethyl)pyrrolidine-2,4-dione = trichosetin. Its pathway is mycotoxin biosynthesis. In terms of biological role, hybrid PKS-NRPS synthetase; part of the gene cluster that mediates the biosynthesis of trichosetin, a trans-fused decalin-containing tetramic acid with antimicrobial activity. The PKS module of PKS-NRPS1 together with the enoylreductase (ER) catalyze the formation of the polyketide unit which is then conjugated to L-serine by the condensation domain of the PKS-NRPS1 NRPS module. Activity of the Dieckmann cyclase domain (RED) results in release of the Dieckmann product intermediate. Diels-Alderase (DA) is involved in endo-selective Diels-Alder cycloaddition to form the decalin ring, leading to the production of N-desmethylequisetin also called trichosetin. The cluster does not contain the equisetin N-methyltransferase and consequently, trichosetin is isolated as final product. The chain is Diels-Alderase from Gibberella fujikuroi (strain CBS 195.34 / IMI 58289 / NRRL A-6831) (Bakanae and foot rot disease fungus).